A 339-amino-acid chain; its full sequence is Adenylosuccinate synthetase (339 aa).

Residues Gly12–Ser18 and Gly42–Ser44 each bind GTP. Asp13 acts as the Proton acceptor in catalysis. Residues Asp13 and Gly42 each coordinate Mg(2+). IMP is bound by residues Asp13–Lys16, Asn40–His43, Thr127, Arg141, Gln179, Thr194, and Arg256. The active-site Proton donor is His43. Substrate is bound at residue Thr252–Arg258. Residues Arg258, Met284–Asp286, and Lys324–Gly326 contribute to the GTP site.

The protein belongs to the adenylosuccinate synthetase family. As to quaternary structure, homodimer. Requires Mg(2+) as cofactor.

The protein resides in the cytoplasm. The enzyme catalyses IMP + L-aspartate + GTP = N(6)-(1,2-dicarboxyethyl)-AMP + GDP + phosphate + 2 H(+). Its pathway is purine metabolism; AMP biosynthesis via de novo pathway; AMP from IMP: step 1/2. Plays an important role in the de novo pathway of purine nucleotide biosynthesis. Catalyzes the first committed step in the biosynthesis of AMP from IMP. In Thermococcus sibiricus (strain DSM 12597 / MM 739), this protein is Adenylosuccinate synthetase.